The primary structure comprises 166 residues: Small ribosomal subunit protein uS5 (166 aa).

The 64-residue stretch at 12-75 (YIEKLVQVNR…EAARRNMIQV (64 aa)) folds into the S5 DRBM domain.

The protein belongs to the universal ribosomal protein uS5 family. As to quaternary structure, part of the 30S ribosomal subunit. Contacts proteins S4 and S8.

Functionally, with S4 and S12 plays an important role in translational accuracy. Its function is as follows. Located at the back of the 30S subunit body where it stabilizes the conformation of the head with respect to the body. The sequence is that of Small ribosomal subunit protein uS5 from Pseudomonas syringae pv. tomato (strain ATCC BAA-871 / DC3000).